The following is a 458-amino-acid chain: Cysteine--tRNA ligase (458 aa).

C29 lines the Zn(2+) pocket. The short motif at 31–41 (PTVYDNPHIGN) is the 'HIGH' region element. Zn(2+) is bound by residues C214, H239, and E243. The short motif at 272 to 276 (KMSKS) is the 'KMSKS' region element. An ATP-binding site is contributed by K275.

Belongs to the class-I aminoacyl-tRNA synthetase family. In terms of assembly, monomer. Zn(2+) serves as cofactor.

Its subcellular location is the cytoplasm. It catalyses the reaction tRNA(Cys) + L-cysteine + ATP = L-cysteinyl-tRNA(Cys) + AMP + diphosphate. The polypeptide is Cysteine--tRNA ligase (Rickettsia bellii (strain OSU 85-389)).